We begin with the raw amino-acid sequence, 218 residues long: Ribonuclease HII (218 aa).

Residues 24-218 (ESIAGVDEVG…KLFAVNGSLT (195 aa)) form the RNase H type-2 domain. A divalent metal cation-binding residues include Asp-30, Glu-31, and Asp-126.

The protein belongs to the RNase HII family. It depends on Mn(2+) as a cofactor. Mg(2+) serves as cofactor.

It is found in the cytoplasm. The catalysed reaction is Endonucleolytic cleavage to 5'-phosphomonoester.. Its function is as follows. Endonuclease that specifically degrades the RNA of RNA-DNA hybrids. The polypeptide is Ribonuclease HII (Prochlorococcus marinus (strain MIT 9313)).